We begin with the raw amino-acid sequence, 433 residues long: Mitochondrial distribution and morphology protein 12 (433 aa).

Positions 1-433 constitute an SMP-LTD domain; sequence MSIDIDWERA…VYPSFWTFLI (433 aa). Disordered regions lie at residues 62-113, 180-279, and 356-376; these read LSDP…GGQM, TPLG…RMRE, and GPETAAGSGGGDTLEPNSPRR. Basic and acidic residues predominate over residues 81–96; it reads SEERSPTREPVDRYGN. A compositionally biased stretch (polar residues) spans 214–236; sequence SAQSRPSTANTGNTLPSRDSMSV. Over residues 268–279 the composition is skewed to basic and acidic residues; it reads PLDDTPPRRMRE.

The protein belongs to the MDM12 family. In terms of assembly, component of the ER-mitochondria encounter structure (ERMES) or MDM complex, composed of MMM1, MDM10, MDM12 and MDM34. An MMM1 homodimer associates with one molecule of MDM12 on each side in a pairwise head-to-tail manner, and the SMP-LTD domains of MMM1 and MDM12 generate a continuous hydrophobic tunnel for phospholipid trafficking.

The protein localises to the mitochondrion outer membrane. It is found in the endoplasmic reticulum membrane. In terms of biological role, component of the ERMES/MDM complex, which serves as a molecular tether to connect the endoplasmic reticulum (ER) and mitochondria. Components of this complex are involved in the control of mitochondrial shape and protein biogenesis, and function in nonvesicular lipid trafficking between the ER and mitochondria. MDM12 is required for the interaction of the ER-resident membrane protein MMM1 and the outer mitochondrial membrane-resident beta-barrel protein MDM10. The MDM12-MMM1 subcomplex functions in the major beta-barrel assembly pathway that is responsible for biogenesis of all mitochondrial outer membrane beta-barrel proteins, and acts in a late step after the SAM complex. The MDM10-MDM12-MMM1 subcomplex further acts in the TOM40-specific pathway after the action of the MDM12-MMM1 complex. Essential for establishing and maintaining the structure of mitochondria and maintenance of mtDNA nucleoids. The sequence is that of Mitochondrial distribution and morphology protein 12 from Ajellomyces capsulatus (strain NAm1 / WU24) (Darling's disease fungus).